A 57-amino-acid chain; its full sequence is Protein Ric1 (57 aa).

The next 2 helical transmembrane spans lie at 8–28 (IPRLICSVIIPPVGVFFQVGC) and 34–54 (INCLLTVLGYIPGVIHAVYIL).

This sequence belongs to the UPF0057 (PMP3) family.

The protein resides in the membrane. This is Protein Ric1 (RIC1) from Phytophthora infestans (Potato late blight agent).